A 623-amino-acid polypeptide reads, in one-letter code: Procollagen galactosyltransferase 1 (623 aa).

The N-terminal stretch at 1–30 is a signal peptide; it reads MAAAPRACKGHGRPLPVLLLLLLLALPPLG. N-linked (GlcNAc...) asparagine glycans are attached at residues Asn-97, Asn-185, and Asn-382. The segment covering 589 to 607 has biased composition (basic and acidic residues); that stretch reads RAKSQKMREQQALSREAKN. Residues 589-623 are disordered; that stretch reads RAKSQKMREQQALSREAKNSDVLQSPLDSAARDEL. A Prevents secretion from ER motif is present at residues 620-623; it reads RDEL.

The protein belongs to the glycosyltransferase 25 family. Post-translationally, N-glycosylated.

It localises to the endoplasmic reticulum lumen. The enzyme catalyses (5R)-5-hydroxy-L-lysyl-[collagen] + UDP-alpha-D-galactose = (5R)-5-O-(beta-D-galactosyl)-5-hydroxy-L-lysyl-[collagen] + UDP + H(+). Functionally, beta-galactosyltransferase that transfers beta-galactose to hydroxylysine residues of type I collagen. By acting on collagen glycosylation, facilitates the formation of collagen triple helix. Also involved in the biosynthesis of collagen type IV. The chain is Procollagen galactosyltransferase 1 (COLGALT1) from Bos taurus (Bovine).